A 256-amino-acid chain; its full sequence is Hydroxyacylglutathione hydrolase (256 aa).

The Zn(2+) site is built by H57, H59, D61, H62, H115, D134, and H172.

Belongs to the metallo-beta-lactamase superfamily. Glyoxalase II family. Monomer. Zn(2+) is required as a cofactor.

It carries out the reaction an S-(2-hydroxyacyl)glutathione + H2O = a 2-hydroxy carboxylate + glutathione + H(+). Its pathway is secondary metabolite metabolism; methylglyoxal degradation; (R)-lactate from methylglyoxal: step 2/2. In terms of biological role, thiolesterase that catalyzes the hydrolysis of S-D-lactoyl-glutathione to form glutathione and D-lactic acid. This chain is Hydroxyacylglutathione hydrolase, found in Rhizobium johnstonii (strain DSM 114642 / LMG 32736 / 3841) (Rhizobium leguminosarum bv. viciae).